We begin with the raw amino-acid sequence, 309 residues long: MRTVTVGTRGSTLALAQTRWVVARLKEEWPETDFRIQTISTKGDRNRESLEQLAQKGDKGFWVKEIEEALLAKKIDIAVHSLKDLPTEQPEGLEISSIPKRVDGRDALIGREGMKKLAELPEGARIGTSSVRRKAFLRAYRPDLIVKDLRGNIDTRLAALGSGEYDAIILAAAGLIRTEQRHRIDEFVDPDILLPAPGQGALALETRTEDDLTIEVAYAIHDHATDDRITAEREFLAGLGAGCMAPVGAHAVIKNGLLTLEGWVGALDGTQVIRATSQGDVAECADIGAELAADMLERGAAELIEAVRE.

An S-(dipyrrolylmethanemethyl)cysteine modification is found at Cys243.

The protein belongs to the HMBS family. As to quaternary structure, monomer. It depends on dipyrromethane as a cofactor.

It carries out the reaction 4 porphobilinogen + H2O = hydroxymethylbilane + 4 NH4(+). Its pathway is porphyrin-containing compound metabolism; protoporphyrin-IX biosynthesis; coproporphyrinogen-III from 5-aminolevulinate: step 2/4. Functionally, tetrapolymerization of the monopyrrole PBG into the hydroxymethylbilane pre-uroporphyrinogen in several discrete steps. This chain is Porphobilinogen deaminase (hemC), found in Deinococcus radiodurans (strain ATCC 13939 / DSM 20539 / JCM 16871 / CCUG 27074 / LMG 4051 / NBRC 15346 / NCIMB 9279 / VKM B-1422 / R1).